Here is a 434-residue protein sequence, read N- to C-terminus: Serine hydroxymethyltransferase (434 aa).

(6S)-5,6,7,8-tetrahydrofolate-binding positions include Leu132 and Gly136–Leu138. Lys241 carries the N6-(pyridoxal phosphate)lysine modification.

Belongs to the SHMT family. In terms of assembly, homodimer. Pyridoxal 5'-phosphate serves as cofactor.

It localises to the cytoplasm. The catalysed reaction is (6R)-5,10-methylene-5,6,7,8-tetrahydrofolate + glycine + H2O = (6S)-5,6,7,8-tetrahydrofolate + L-serine. It participates in one-carbon metabolism; tetrahydrofolate interconversion. It functions in the pathway amino-acid biosynthesis; glycine biosynthesis; glycine from L-serine: step 1/1. Catalyzes the reversible interconversion of serine and glycine with tetrahydrofolate (THF) serving as the one-carbon carrier. This reaction serves as the major source of one-carbon groups required for the biosynthesis of purines, thymidylate, methionine, and other important biomolecules. Also exhibits THF-independent aldolase activity toward beta-hydroxyamino acids, producing glycine and aldehydes, via a retro-aldol mechanism. The sequence is that of Serine hydroxymethyltransferase from Nitrobacter hamburgensis (strain DSM 10229 / NCIMB 13809 / X14).